The chain runs to 300 residues: Tyrosine recombinase XerC (300 aa).

The 86-residue stretch at 2 to 87 (TSLSPLLEKF…SIKSFYKYLV (86 aa)) folds into the Core-binding (CB) domain. One can recognise a Tyr recombinase domain in the interval 108–294 (TLPKVLPVEE…TWEQLQQVYD (187 aa)). Active-site residues include R148, K172, H246, R249, and H272. Y281 serves as the catalytic O-(3'-phospho-DNA)-tyrosine intermediate.

Belongs to the 'phage' integrase family. XerC subfamily. Forms a cyclic heterotetrameric complex composed of two molecules of XerC and two molecules of XerD.

The protein resides in the cytoplasm. Functionally, site-specific tyrosine recombinase, which acts by catalyzing the cutting and rejoining of the recombining DNA molecules. The XerC-XerD complex is essential to convert dimers of the bacterial chromosome into monomers to permit their segregation at cell division. It also contributes to the segregational stability of plasmids. This is Tyrosine recombinase XerC from Myxococcus xanthus.